A 41-amino-acid polypeptide reads, in one-letter code: MNCCRRTSVMLEICILLTLLETIWPWIAKRAVTNRSSCSRR.

This is an uncharacterized protein from Saccharomyces cerevisiae (strain ATCC 204508 / S288c) (Baker's yeast).